The chain runs to 616 residues: TAF6-like RNA polymerase II p300/CBP-associated factor-associated factor 65 kDa subunit 6L (616 aa).

Disordered stretches follow at residues 399–432 (SLLLQESPPGGSSETGFGSGLPPPSGVAGPEDPS) and 455–539 (FGTG…GTRD). 2 positions are modified to phosphoserine: serine 494 and serine 500. Residues arginine 549, arginine 555, and arginine 587 each carry the asymmetric dimethylarginine modification.

The protein belongs to the TAF6 family. In terms of assembly, the PCAF complex is composed of a number of TBP-associated factors (TAFS), such as TAF5, TAF5L, TAF6, TAF6L, TAF9, TAF10 and TAF12, PCAF, and also PCAF-associated factors (PAFs), such as TADA2L/ADA2, TADA3L/ADA3 and SPT3. Component of the STAGA transcription coactivator-HAT complex, at least composed of SUPT3H, GCN5L2, TAF5L, TAF6L, SUPT7L, TADA3L, TAD1L, TAF10, TAF12, TRRAP and TAF9.

The protein resides in the nucleus. Its function is as follows. Functions as a component of the PCAF complex. The PCAF complex is capable of efficiently acetylating histones in a nucleosomal context. The PCAF complex could be considered as the human version of the yeast SAGA complex. With TAF5L, acts as an epigenetic regulator essential for somatic reprogramming. Regulates target genes through H3K9ac deposition and MYC recruitment which trigger MYC regulatory network to orchestrate gene expression programs to control embryonic stem cell state. Functions with MYC to activate target gene expression through RNA polymerase II pause release. This Mus musculus (Mouse) protein is TAF6-like RNA polymerase II p300/CBP-associated factor-associated factor 65 kDa subunit 6L.